The following is a 174-amino-acid chain: Probable inosine/xanthosine triphosphatase (174 aa).

Asp63 is a Mg(2+) binding site.

It belongs to the YjjX NTPase family. As to quaternary structure, homodimer. Requires Mg(2+) as cofactor. Mn(2+) is required as a cofactor.

The catalysed reaction is XTP + H2O = XDP + phosphate + H(+). It carries out the reaction ITP + H2O = IDP + phosphate + H(+). Functionally, phosphatase that hydrolyzes non-canonical purine nucleotides such as XTP and ITP to their respective diphosphate derivatives. Probably excludes non-canonical purines from DNA/RNA precursor pool, thus preventing their incorporation into DNA/RNA and avoiding chromosomal lesions. This is Probable inosine/xanthosine triphosphatase from Methanocella arvoryzae (strain DSM 22066 / NBRC 105507 / MRE50).